The primary structure comprises 459 residues: Fe(3+)-Zn(2+) purple acid phosphatase (459 aa).

The N-terminal stretch at 1-22 is a signal peptide; the sequence is MGVVKGLLALALVLNVVVVSNG. G23 is modified (blocked amino end (Gly)). An N-linked (GlcNAc...) asparagine; partial glycan is attached at N108. N136 carries an N-linked (GlcNAc...) asparagine glycan. D162 contacts Fe cation. N170 carries an N-linked (GlcNAc...) asparagine glycan. Positions 191 and 194 each coordinate Fe cation. A Zn(2+)-binding site is contributed by D191. N228 is a Zn(2+) binding site. Residue N238 is glycosylated (N-linked (GlcNAc...) asparagine). H313 is a Zn(2+) binding site. H323 (proton donor) is an active-site residue. H350 provides a ligand contact to Zn(2+). H352 provides a ligand contact to Fe cation. N-linked (GlcNAc...) asparagine glycosylation occurs at N423.

The protein belongs to the metallophosphoesterase superfamily. Purple acid phosphatase family. Homodimer; disulfide-linked. It depends on Fe cation as a cofactor. The cofactor is Zn(2+).

The protein localises to the secreted. It carries out the reaction a phosphate monoester + H2O = an alcohol + phosphate. Its activity is regulated as follows. Inhibited by compounds CC24201, CC27209, and MO07123. Inhibited by the tetraoxoanions molybdate and phosphate. Not inhibited by EDTA or tartrate. This is Fe(3+)-Zn(2+) purple acid phosphatase from Phaseolus vulgaris (Kidney bean).